Consider the following 587-residue polypeptide: UDP-N-acetylmuramoylalanine--D-glutamate ligase (587 aa).

A disordered region spans residues 124–147 (DHLVPPESPLSDASDISDASDATD). A compositionally biased stretch (low complexity) spans 132 to 147 (PLSDASDISDASDATD). 214–220 (GTNGKTT) serves as a coordination point for ATP.

Belongs to the MurCDEF family.

It localises to the cytoplasm. It carries out the reaction UDP-N-acetyl-alpha-D-muramoyl-L-alanine + D-glutamate + ATP = UDP-N-acetyl-alpha-D-muramoyl-L-alanyl-D-glutamate + ADP + phosphate + H(+). The protein operates within cell wall biogenesis; peptidoglycan biosynthesis. Cell wall formation. Catalyzes the addition of glutamate to the nucleotide precursor UDP-N-acetylmuramoyl-L-alanine (UMA). The polypeptide is UDP-N-acetylmuramoylalanine--D-glutamate ligase (Polaromonas sp. (strain JS666 / ATCC BAA-500)).